The following is a 725-amino-acid chain: Ophiobolin F synthase (725 aa).

A (7Z)-ophiobola-7,19-dien-3-ol synthase region spans residues 1–322 (MEYKYSTIVD…RYHADAKFNE (322 aa)). Residues D93 and D97 each contribute to the Mg(2+) site. Position 93 (D93) interacts with substrate. The short motif at 93-97 (DDEID) is the DDXXD 1 element. Residues 182 to 185 (RCMD), N226, 230 to 234 (SYEKE), and 313 to 314 (RY) contribute to the substrate site. Residues 226-234 (NDLFSYEKE) carry the NSE/DTE motif. Positions 323–725 (LQMLRAEHGV…LRMMLELLKV (403 aa)) are geranylfarnesyl diphosphate synthase. The tract at residues 362-388 (GVNGVNGKRKRSGEETADDARTNGNGI) is disordered. Over residues 373–382 (SGEETADDAR) the composition is skewed to basic and acidic residues. 3 residues coordinate isopentenyl diphosphate: K436, R439, and H468. The Mg(2+) site is built by D475 and D479. Positions 475–479 (DDIED) match the DDXXD 2 motif. R484 contributes to the dimethylallyl diphosphate binding site. R485 is a binding site for isopentenyl diphosphate. Dimethylallyl diphosphate-binding residues include K562, T563, Q601, N608, K618, and K628.

In the N-terminal section; belongs to the terpene synthase family. It in the C-terminal section; belongs to the FPP/GGPP synthase family. Mg(2+) serves as cofactor.

It carries out the reaction isopentenyl diphosphate + (2E,6E)-farnesyl diphosphate = (2E,6E,10E)-geranylgeranyl diphosphate + diphosphate. The enzyme catalyses isopentenyl diphosphate + (2E,6E,10E)-geranylgeranyl diphosphate = (2E,6E,10E,14E)-geranylfarnesyl diphosphate + diphosphate. It catalyses the reaction (2E,6E,10E,14E)-geranylfarnesyl diphosphate + H2O = ophiobolin F + diphosphate. It functions in the pathway secondary metabolite biosynthesis; terpenoid biosynthesis. Bifunctional sesterterpene synthase that converts isopentenyl diphosphate (IPP) and dimethylallyl diphosphate (DMAPP) into ophiobolin F. The C-terminal prenyltransferase (PT) domain of AcldOS converts isopentenyl diphosphate and dimethylallyl diphosphate into geranylfarnesyl diphosphate (GFPP), whereas the N-terminal terpene cyclase (TC) domain catalyzes the cyclization of GFPP to ophiobolin F. This Aspergillus calidoustus protein is Ophiobolin F synthase.